Here is a 440-residue protein sequence, read N- to C-terminus: MFLAQEIIRKKRDGQPLSEAEIRFFINGIRDNVVSEGQIAALAMTIYFHDMTMPERVALTMAMRDSGTVLDWKSLSLNGPLVDKHSTGGVGDVTSLMLGPMVAACGGYVPMISGRGLGHTGGTLDKLEAIPGFNIFPDDNAFRKIIQDVGVAIIGQTSSLAPADKRFYATRDITATVDSIPLITASILAKKLAEGLDALVMDVKVGSGAFMPTYALSADLAQAIVGVANGAGCKTTALLTDMNQVLASSAGNAVEVREAVRFLTGEYRNPRLLEVTMALCVEMLLSGGLAKDDADARAKLQAVLDNGKAAEVFGRMVAAQQGPTDFVERYDSYLPAATLSKPVYAEKQGIISAMDTRALGMAVVSLGGGRRRATDNIDYSVGLTGMARLGDKVDTQQPLAVIHANDEESWQQAAEEVRSAMVLSDKAPEVTPVVYKRITE.

The protein belongs to the thymidine/pyrimidine-nucleoside phosphorylase family. In terms of assembly, homodimer.

The enzyme catalyses thymidine + phosphate = 2-deoxy-alpha-D-ribose 1-phosphate + thymine. It participates in pyrimidine metabolism; dTMP biosynthesis via salvage pathway; dTMP from thymine: step 1/2. Functionally, the enzymes which catalyze the reversible phosphorolysis of pyrimidine nucleosides are involved in the degradation of these compounds and in their utilization as carbon and energy sources, or in the rescue of pyrimidine bases for nucleotide synthesis. This Serratia proteamaculans (strain 568) protein is Thymidine phosphorylase.